We begin with the raw amino-acid sequence, 101 residues long: Urease subunit beta (101 aa).

It belongs to the urease beta subunit family. As to quaternary structure, heterotrimer of UreA (gamma), UreB (beta) and UreC (alpha) subunits. Three heterotrimers associate to form the active enzyme.

It localises to the cytoplasm. It catalyses the reaction urea + 2 H2O + H(+) = hydrogencarbonate + 2 NH4(+). The protein operates within nitrogen metabolism; urea degradation; CO(2) and NH(3) from urea (urease route): step 1/1. In Burkholderia multivorans (strain ATCC 17616 / 249), this protein is Urease subunit beta.